The sequence spans 305 residues: uncharacterized protein (305 aa).

This is an uncharacterized protein from Acanthamoeba polyphaga mimivirus (APMV).